A 188-amino-acid polypeptide reads, in one-letter code: Elongation factor P (188 aa).

Belongs to the elongation factor P family.

The protein localises to the cytoplasm. It functions in the pathway protein biosynthesis; polypeptide chain elongation. Functionally, involved in peptide bond synthesis. Stimulates efficient translation and peptide-bond synthesis on native or reconstituted 70S ribosomes in vitro. Probably functions indirectly by altering the affinity of the ribosome for aminoacyl-tRNA, thus increasing their reactivity as acceptors for peptidyl transferase. In Anaplasma phagocytophilum (strain HZ), this protein is Elongation factor P.